Consider the following 475-residue polypeptide: Ribulose bisphosphate carboxylase large chain (475 aa).

Positions 1–2 are excised as a propeptide; it reads MS. Proline 3 carries the N-acetylproline modification. N6,N6,N6-trimethyllysine is present on lysine 14. Residues asparagine 123 and threonine 173 each coordinate substrate. Lysine 175 acts as the Proton acceptor in catalysis. Lysine 177 contacts substrate. Mg(2+)-binding residues include lysine 201, aspartate 203, and glutamate 204. Lysine 201 is modified (N6-carboxylysine). Catalysis depends on histidine 294, which acts as the Proton acceptor. Residues arginine 295, histidine 327, and serine 379 each contribute to the substrate site.

Belongs to the RuBisCO large chain family. Type I subfamily. As to quaternary structure, heterohexadecamer of 8 large chains and 8 small chains; disulfide-linked. The disulfide link is formed within the large subunit homodimers. Requires Mg(2+) as cofactor. The disulfide bond which can form in the large chain dimeric partners within the hexadecamer appears to be associated with oxidative stress and protein turnover.

Its subcellular location is the plastid. The protein localises to the chloroplast. It carries out the reaction 2 (2R)-3-phosphoglycerate + 2 H(+) = D-ribulose 1,5-bisphosphate + CO2 + H2O. It catalyses the reaction D-ribulose 1,5-bisphosphate + O2 = 2-phosphoglycolate + (2R)-3-phosphoglycerate + 2 H(+). Functionally, ruBisCO catalyzes two reactions: the carboxylation of D-ribulose 1,5-bisphosphate, the primary event in carbon dioxide fixation, as well as the oxidative fragmentation of the pentose substrate in the photorespiration process. Both reactions occur simultaneously and in competition at the same active site. This is Ribulose bisphosphate carboxylase large chain from Cedrus deodara (Deodar cedar).